Consider the following 144-residue polypeptide: Nucleoside diphosphate kinase (144 aa).

ATP-binding residues include Lys9, Phe57, Arg85, Thr91, Arg102, and Asn112. His120 (pros-phosphohistidine intermediate) is an active-site residue.

Belongs to the NDK family. As to quaternary structure, homotetramer. Requires Mg(2+) as cofactor.

The protein resides in the cytoplasm. The catalysed reaction is a 2'-deoxyribonucleoside 5'-diphosphate + ATP = a 2'-deoxyribonucleoside 5'-triphosphate + ADP. It catalyses the reaction a ribonucleoside 5'-diphosphate + ATP = a ribonucleoside 5'-triphosphate + ADP. Functionally, major role in the synthesis of nucleoside triphosphates other than ATP. The ATP gamma phosphate is transferred to the NDP beta phosphate via a ping-pong mechanism, using a phosphorylated active-site intermediate. This is Nucleoside diphosphate kinase from Streptococcus uberis (strain ATCC BAA-854 / 0140J).